Consider the following 203-residue polypeptide: Protein-methionine-sulfoxide reductase heme-binding subunit MsrQ (203 aa).

5 helical membrane passes run 13–33 (IAIW…INLG), 79–99 (LLGL…SILE), 116–136 (PYLT…LTST), 147–167 (WQKL…HYLW), and 169–189 (VKTL…LLLL).

Belongs to the MsrQ family. Heterodimer of a catalytic subunit (MsrP) and a heme-binding subunit (MsrQ). Requires FMN as cofactor. Heme b is required as a cofactor.

The protein localises to the cell inner membrane. Part of the MsrPQ system that repairs oxidized periplasmic proteins containing methionine sulfoxide residues (Met-O), using respiratory chain electrons. Thus protects these proteins from oxidative-stress damage caused by reactive species of oxygen and chlorine generated by the host defense mechanisms. MsrPQ is essential for the maintenance of envelope integrity under bleach stress, rescuing a wide series of structurally unrelated periplasmic proteins from methionine oxidation. MsrQ provides electrons for reduction to the reductase catalytic subunit MsrP, using the quinone pool of the respiratory chain. The polypeptide is Protein-methionine-sulfoxide reductase heme-binding subunit MsrQ (Yersinia pseudotuberculosis serotype O:1b (strain IP 31758)).